The primary structure comprises 423 residues: Serine hydroxymethyltransferase (423 aa).

Residues Leu-125 and 129 to 131 (GHL) contribute to the (6S)-5,6,7,8-tetrahydrofolate site. Lys-234 bears the N6-(pyridoxal phosphate)lysine mark. Glu-249 lines the (6S)-5,6,7,8-tetrahydrofolate pocket.

The protein belongs to the SHMT family. Homodimer. The cofactor is pyridoxal 5'-phosphate.

It localises to the cytoplasm. It catalyses the reaction (6R)-5,10-methylene-5,6,7,8-tetrahydrofolate + glycine + H2O = (6S)-5,6,7,8-tetrahydrofolate + L-serine. Its pathway is one-carbon metabolism; tetrahydrofolate interconversion. The protein operates within amino-acid biosynthesis; glycine biosynthesis; glycine from L-serine: step 1/1. Its function is as follows. Catalyzes the reversible interconversion of serine and glycine with tetrahydrofolate (THF) serving as the one-carbon carrier. This reaction serves as the major source of one-carbon groups required for the biosynthesis of purines, thymidylate, methionine, and other important biomolecules. Also exhibits THF-independent aldolase activity toward beta-hydroxyamino acids, producing glycine and aldehydes, via a retro-aldol mechanism. In Thermobifida fusca (strain YX), this protein is Serine hydroxymethyltransferase.